A 96-amino-acid chain; its full sequence is Phosphoribosyl-ATP pyrophosphatase (96 aa).

Belongs to the PRA-PH family.

It is found in the cytoplasm. The catalysed reaction is 1-(5-phospho-beta-D-ribosyl)-ATP + H2O = 1-(5-phospho-beta-D-ribosyl)-5'-AMP + diphosphate + H(+). The protein operates within amino-acid biosynthesis; L-histidine biosynthesis; L-histidine from 5-phospho-alpha-D-ribose 1-diphosphate: step 2/9. The chain is Phosphoribosyl-ATP pyrophosphatase from Methanococcus vannielii (strain ATCC 35089 / DSM 1224 / JCM 13029 / OCM 148 / SB).